The primary structure comprises 498 residues: ATP synthase subunit beta, chloroplastic (498 aa).

Gly-172–Thr-179 is an ATP binding site.

It belongs to the ATPase alpha/beta chains family. In terms of assembly, F-type ATPases have 2 components, CF(1) - the catalytic core - and CF(0) - the membrane proton channel. CF(1) has five subunits: alpha(3), beta(3), gamma(1), delta(1), epsilon(1). CF(0) has four main subunits: a(1), b(1), b'(1) and c(9-12).

The protein localises to the plastid. The protein resides in the chloroplast thylakoid membrane. The catalysed reaction is ATP + H2O + 4 H(+)(in) = ADP + phosphate + 5 H(+)(out). In terms of biological role, produces ATP from ADP in the presence of a proton gradient across the membrane. The catalytic sites are hosted primarily by the beta subunits. The polypeptide is ATP synthase subunit beta, chloroplastic (Hyphaene coriacea (Ilala palm)).